Consider the following 289-residue polypeptide: Rhodopsin (289 aa).

The Extracellular portion of the chain corresponds to 1-7 (YLVNPAA). The chain crosses the membrane as a helical span at residues 8–32 (YAALGAYMFLLILIGFPVNFLTLYV). Over 33 to 44 (TLEHKKLRTPLN) the chain is Cytoplasmic. Residues 45–67 (YILLNLAVADLFMVLGGFTTTMY) traverse the membrane as a helical segment. Residues 68–81 (TSMHGYFVLGRLGC) lie on the Extracellular side of the membrane. Cys81 and Cys158 are disulfide-bonded. The chain crosses the membrane as a helical span at residues 82–104 (NLEGFFATLGGEIALWSLVVLAI). Residues 105-107 (ERW) carry the 'Ionic lock' involved in activated form stabilization motif. Topologically, residues 105 to 123 (ERWIVVCKPISNFRFTEDH) are cytoplasmic. The chain crosses the membrane as a helical span at residues 124 to 144 (AIMGLAFSWVMALSCSVPPLV). Residues 145–173 (GWSRYIPEAMQCSCGVDYYTRAEGFNTES) are Extracellular-facing. Residues 174–195 (FVLYMFTVHFLIPLSVIFFCYG) traverse the membrane as a helical segment. The Cytoplasmic portion of the chain corresponds to 196–223 (RLLCAVKEAAAAQQESETTQRSEKEVSR). A helical transmembrane segment spans residues 224–245 (MVVLMVIGFLVCWLPYASTAWW). The Extracellular segment spans residues 246–257 (IFCNQGSEFGPV). The chain crosses the membrane as a helical span at residues 258 to 279 (FMTIPAFFAKSSAIYNPMIYIC). Lys267 bears the N6-(retinylidene)lysine mark. Over 280 to 289 (MNKQFRHCMI) the chain is Cytoplasmic.

Belongs to the G-protein coupled receptor 1 family. Opsin subfamily. Post-translationally, phosphorylated on some or all of the serine and threonine residues present in the C-terminal region. Contains one covalently linked retinal chromophore.

It localises to the membrane. Its subcellular location is the cell projection. The protein localises to the cilium. The protein resides in the photoreceptor outer segment. Photoreceptor required for image-forming vision at low light intensity. While most salt water fish species use retinal as chromophore, most freshwater fish use 3-dehydroretinal, or a mixture of retinal and 3-dehydroretinal. Light-induced isomerization of 11-cis to all-trans retinal triggers a conformational change that activates signaling via G-proteins. Subsequent receptor phosphorylation mediates displacement of the bound G-protein alpha subunit by arrestin and terminates signaling. In Comephorus dybowskii, this protein is Rhodopsin (rho).